The sequence spans 460 residues: Ammonium transporter Rh type B (460 aa).

Topologically, residues 1–10 are cytoplasmic; it reads MTGYSTNMRI. Residues 11–31 traverse the membrane as a helical segment; that stretch reads KLPVFCLLLEFITIILFAVFV. Over 32–62 the chain is Extracellular; it reads RYDHESDAKQWHDEMRNHSVQNAENDFYFRY. Residue N48 is glycosylated (N-linked (GlcNAc...) asparagine). The helical transmembrane segment at 63–83 threads the bilayer; sequence PSFQDVHVMIFIGFGFLMTFL. Residues 84–87 lie on the Cytoplasmic side of the membrane; that stretch reads KRYG. The chain crosses the membrane as a helical span at residues 88–108; sequence FSSVAFNFLIAAFGLQWSTLI. Over 109 to 125 the chain is Extracellular; sequence QGFFHGFHDGKIHVGIE. Residues 126-146 traverse the membrane as a helical segment; sequence SMINADFCTGAVLISFGAVLG. At 147 to 150 the chain is on the cytoplasmic side; the sequence is KTSP. A helical transmembrane segment spans residues 151–171; the sequence is VQLIVMTLIEVTLFGINEYII. Residues 172-179 are Extracellular-facing; it reads LNIVGAKD. Residues 180–202 form a helical membrane-spanning segment; it reads AGGSMTIHTFGAYFGLIVSRVLY. Residues 203–220 lie on the Cytoplasmic side of the membrane; sequence RDDLEKSRQREGSVYHSD. Residues 221–241 traverse the membrane as a helical segment; that stretch reads LFAMIGTIYLWMFWPSFNSAI. Residues 242-252 lie on the Extracellular side of the membrane; it reads TAHGDDQHRTV. The chain crosses the membrane as a helical span at residues 253–273; that stretch reads MNTYYSLAACTLATFGFSALL. The Cytoplasmic segment spans residues 274–283; that stretch reads NGEGKLDMVH. The chain crosses the membrane as a helical span at residues 284–304; it reads IQNAALAGGVAVGTSGEMMLT. Position 305 (P305) is a topological domain, extracellular. Residues 306–326 form a helical membrane-spanning segment; that stretch reads FGAMIAGTLAGMISVLGYKYL. Over 327 to 347 the chain is Cytoplasmic; sequence TPVLDSKLKIQDTCGVHNLHG. Residues 348 to 368 form a helical membrane-spanning segment; the sequence is MPGILGALIGAIVALFATAEI. Topologically, residues 369–394 are extracellular; sequence YGAGMEDVFPLISDGSRTAKQQSLYQ. The helical transmembrane segment at 395–415 threads the bilayer; sequence FLALLVALGFAILGGLVVGFI. Residues 416 to 460 lie on the Cytoplasmic side of the membrane; it reads LKLPIFGTPSDAECFEDAVYWEVPGGEGHQQLTVVINNEDPDTQA.

This sequence belongs to the ammonium transporter (TC 2.A.49) family. Rh subfamily.

Its subcellular location is the basolateral cell membrane. The protein localises to the cytoplasmic vesicle membrane. Functionally, functions as a specific ammonium transporter. This chain is Ammonium transporter Rh type B (rhbg), found in Xenopus tropicalis (Western clawed frog).